The primary structure comprises 1328 residues: WASH complex subunit 2 (1328 aa).

The tract at residues 1–219 is sufficient for interaction with WASHC3, WASHC4 and WASHC5; required for interaction with WASHC1; the sequence is MNRTSPDSEQ…VGSDRGSIVD (219 aa). A phosphoserine mark is found at Ser-157, Ser-159, Ser-204, Ser-205, and Ser-209. Low complexity predominate over residues 201–213; it reads GELSSEEGSVGSD. Disordered stretches follow at residues 201-655 and 675-830; these read GELS…KTNL and KKTQ…PKST. Composition is skewed to acidic residues over residues 219-231 and 248-273; these read DSEDEKEEEESDD and SDEEEDDDADLFADSEKEGDDIEDIE. The residue at position 283 (Ser-283) is a Phosphoserine. Residues 288 to 323 are compositionally biased toward basic and acidic residues; it reads LAARIKGDVSNQRKEGHTDGKPQRTVKEKKERRTPA. Thr-321 bears the Phosphothreonine mark. Positions 346–592 are sufficient for interaction with CCDC93; that stretch reads SRGGLFSDRQ…QTSSLPPQSQ (247 aa). Residues 347 to 1328 are interaction with VPS35; the sequence is RGGLFSDRQG…DDPLNAFGSQ (982 aa). Residues 357-367 carry the LFa 1 motif; it reads LFDDDDESDLF. A phosphoserine mark is found at Ser-384 and Ser-387. Short sequence motifs (LFa) lie at residues 440–455 and 474–483; these read LFDDDDNDSDEDDNFF and IFDDDEGDLF. Residues 441-453 show a composition bias toward acidic residues; the sequence is FDDDDNDSDEDDN. Polar residues predominate over residues 508–528; the sequence is TITLPSSKNPKLVSETKTQKG. Short sequence motifs (LFa) lie at residues 529–540 and 564–575; these read LFSDEEDSEDLF and LFGDEDEEDNLF. Ser-531 and Ser-536 each carry phosphoserine. Positions 539 to 556 are enriched in low complexity; that stretch reads LFSSQSSSKTKSASVLSS. Polar residues predominate over residues 582–592; sequence KQTSSLPPQSQ. 2 positions are modified to phosphoserine: Ser-610 and Ser-611. The segment covering 627–638 has biased composition (basic and acidic residues); sequence ASERKSKGERWD. 2 short sequence motifs (LFa) span residues 655–667 and 683–695; these read LFEEEDDDGVDLF and LFEDDTDSGSSLF. Over residues 690–699 the composition is skewed to polar residues; sequence SGSSLFSLPP. A phosphoserine mark is found at Ser-720, Ser-744, Ser-749, Ser-780, and Ser-795. Acidic residues predominate over residues 797 to 808; that stretch reads FDEDEDKVEDDS. 2 short sequence motifs (LFa) span residues 832-840 and 849-855; these read VFQDEELLF and DPDVDLF. 2 disordered regions span residues 863-940 and 991-1088; these read LSMP…EPSS and PTLP…AMAV. Residues Ser-867 and Ser-870 each carry the phosphoserine modification. Residues 871-881 carry the LFa 10 motif; sequence LFGDDDDDDLF. Positions 894–919 are enriched in basic and acidic residues; sequence PEKKGTLRKDHKPPELTEGSKEKSTW. Positions 925–1328 are interaction with phospholipids; that stretch reads QDSSGLTPFK…DDPLNAFGSQ (404 aa). The span at 1016 to 1034 shows a compositional bias: basic residues; that stretch reads NKGRVKVRGKRRPQTRAAR. The segment at 1017-1035 is required for interaction with F-actin-capping protein subunit alpha (CAPZA1 or CAPZA2 or CAPZA3); the sequence is KGRVKVRGKRRPQTRAARR. 4 positions are modified to phosphoserine: Ser-1042, Ser-1060, Ser-1077, and Ser-1102. The segment at 1115-1210 is disordered; sequence AHLFDSGDIF…KKNQWKSDSH (96 aa). 3 short sequence motifs (LFa) span residues 1117-1124, 1157-1171, and 1187-1195; these read LFDSGDIF, VFPDLSEASGVDDLF, and LLEDEEDLF. Phosphoserine occurs at positions 1162 and 1165. A compositionally biased stretch (basic and acidic residues) spans 1196–1210; it reads ADQKGKKNQWKSDSH. 3 short sequence motifs (LFa) span residues 1220 to 1226, 1249 to 1257, and 1277 to 1286; these read IFEDDIF, LFDDNIDIF, and MFDDDTDDIF. The disordered stretch occupies residues 1289–1310; it reads GLQAKASKPKSQSAEAVSELRS. The short motif at 1317–1325 is the LFa 17 element; the sequence is IFDDPLNAF. Residue Ser-1327 is modified to Phosphoserine.

Belongs to the FAM21 family. In terms of assembly, component of the WASH core complex also described as WASH regulatory complex (SHRC) composed of WASHC1, WASHC2, WASHC3, WASHC4 and WASHC5; in the complex interacts (via N-terminus) directly with WASHC1. The WASH core complex associates with the F-actin-capping protein dimer (formed by CAPZA1, CAPZA2 or CAPZA3 and CAPZB) in a transient or substoichiometric manner which was initially described as WASH complex. Interacts with VPS35; mediates the association with the retromer CSC complex. Interacts with FKBP15. Interacts with CCDC93, CCDC22, VPS35L; indicative for an association of the WASH core complex with the CCC and retriever complexes. Directly interacts with TBC1D23.

The protein resides in the early endosome membrane. It is found in the cell membrane. In terms of biological role, acts as a component of the WASH core complex that functions as a nucleation-promoting factor (NPF) at the surface of endosomes, where it recruits and activates the Arp2/3 complex to induce actin polymerization, playing a key role in the fission of tubules that serve as transport intermediates during endosome sorting. Mediates the recruitment of the WASH core complex to endosome membranes via binding to phospholipids and VPS35 of the retromer CSC. Mediates the recruitment of the F-actin-capping protein dimer to the WASH core complex probably promoting localized F-actin polymerization needed for vesicle scission. Via its C-terminus binds various phospholipids, most strongly phosphatidylinositol 4-phosphate (PtdIns-(4)P), phosphatidylinositol 5-phosphate (PtdIns-(5)P) and phosphatidylinositol 3,5-bisphosphate (PtdIns-(3,5)P2). Involved in the endosome-to-plasma membrane trafficking and recycling of SNX27-retromer-dependent cargo proteins, such as GLUT1. Required for the association of DNAJC13, ENTR1, ANKRD50 with retromer CSC subunit VPS35. Required for the endosomal recruitment of CCC and retriever complexes subunits COMMD1 and CCDC93 as well as the retrievere complex subunit VPS35L. This chain is WASH complex subunit 2, found in Rattus norvegicus (Rat).